We begin with the raw amino-acid sequence, 429 residues long: MQTKSILTAALLAAAPASAQLHELAVKAGLKYFGTALREGAINSDQQYNRILSDTREFGQLVPENGQKWDATEPNRGQFNFQQGDITANKARQNGQGLRCHTLIWYSQLPGWVSSGNWNRQTLEAVMKTHIDNVMGHYKGQCYAWDVVNEAVDDNGQWRNNVFLRVFGTDYLPLSFNLAKAADPDTKLYYNDYNLEYNQAKTDRAVELVKIVQDAGAPIDGVGFQGHLIVGSTPTRQQLATVLRRFTSLGVEVAYTELDIRHSRLPASQQALVTQGNDFANVVGSCLDVAGCVGVTVWSFTDKYSWIPETFSGEGDALIYDRNFNKKPAWTSISSVLAAAATNPPASSSTSVVVPTTTFVTTTTTPPPISSPIVPSTTTTSAVPTTTVSPPEPEQTRWGQCGGIGWNGPTKCQSPWTCTRLNDWYFQCL.

The first 19 residues, 1–19 (MQTKSILTAALLAAAPASA), serve as a signal peptide directing secretion. Positions 43–336 (NSDQQYNRIL…KPAWTSISSV (294 aa)) constitute a GH10 domain. Catalysis depends on glutamate 150, which acts as the Proton donor. Catalysis depends on glutamate 257, which acts as the Nucleophile. Cysteines 286 and 292 form a disulfide. A disordered region spans residues 364–395 (TTPPPISSPIVPSTTTTSAVPTTTVSPPEPEQ). Positions 371–389 (SPIVPSTTTTSAVPTTTVS) are enriched in low complexity. Residues 393-429 (PEQTRWGQCGGIGWNGPTKCQSPWTCTRLNDWYFQCL) enclose the CBM1 domain.

It belongs to the glycosyl hydrolase 10 (cellulase F) family.

The protein resides in the secreted. The enzyme catalyses Endohydrolysis of (1-&gt;4)-beta-D-xylosidic linkages in xylans.. The protein operates within glycan degradation; xylan degradation. Its function is as follows. Endo-1,4-beta-xylanase involved in the hydrolysis of xylan, a major structural heterogeneous polysaccharide found in plant biomass representing the second most abundant polysaccharide in the biosphere, after cellulose. This Humicola insolens (Soft-rot fungus) protein is Endo-1,4-beta-xylanase 1.